Consider the following 228-residue polypeptide: 5'-methylthioadenosine/S-adenosylhomocysteine nucleosidase (228 aa).

Glu-11 (proton acceptor) is an active-site residue. Substrate is bound by residues Gly-77, Ile-151, and 172 to 173 (ME). Catalysis depends on Asp-196, which acts as the Proton donor.

Belongs to the PNP/UDP phosphorylase family. MtnN subfamily.

The enzyme catalyses S-adenosyl-L-homocysteine + H2O = S-(5-deoxy-D-ribos-5-yl)-L-homocysteine + adenine. The catalysed reaction is S-methyl-5'-thioadenosine + H2O = 5-(methylsulfanyl)-D-ribose + adenine. It carries out the reaction 5'-deoxyadenosine + H2O = 5-deoxy-D-ribose + adenine. It participates in amino-acid biosynthesis; L-methionine biosynthesis via salvage pathway; S-methyl-5-thio-alpha-D-ribose 1-phosphate from S-methyl-5'-thioadenosine (hydrolase route): step 1/2. Catalyzes the irreversible cleavage of the glycosidic bond in both 5'-methylthioadenosine (MTA) and S-adenosylhomocysteine (SAH/AdoHcy) to adenine and the corresponding thioribose, 5'-methylthioribose and S-ribosylhomocysteine, respectively. Also cleaves 5'-deoxyadenosine, a toxic by-product of radical S-adenosylmethionine (SAM) enzymes, into 5-deoxyribose and adenine. The protein is 5'-methylthioadenosine/S-adenosylhomocysteine nucleosidase of Staphylococcus aureus (strain JH1).